An 845-amino-acid chain; its full sequence is Beta-glucosidase (845 aa).

Asn-66 carries N-linked (GlcNAc...) asparagine glycosylation. The active site involves Asp-225. N-linked (GlcNAc...) asparagine glycosylation is found at Asn-304, Asn-438, and Asn-621. The PA14 domain maps to 408–568 (AENAGLIAKF…DDDEEIRNAA (161 aa)).

It belongs to the glycosyl hydrolase 3 family. In terms of assembly, homotetramer.

It carries out the reaction Hydrolysis of terminal, non-reducing beta-D-glucosyl residues with release of beta-D-glucose.. Its pathway is glycan metabolism; cellulose degradation. In Kluyveromyces marxianus (Yeast), this protein is Beta-glucosidase.